A 427-amino-acid polypeptide reads, in one-letter code: Serine/threonine-protein kinase AFC2 (427 aa).

A Protein kinase domain is found at 98 to 423; that stretch reads YKIYSKMGEG…AREALRHPFF (326 aa). Residues 104–112 and lysine 127 contribute to the ATP site; that span reads MGEGTFGQV. Aspartate 223 (proton acceptor) is an active-site residue.

It belongs to the protein kinase superfamily. CMGC Ser/Thr protein kinase family. Lammer subfamily.

It catalyses the reaction L-seryl-[protein] + ATP = O-phospho-L-seryl-[protein] + ADP + H(+). The catalysed reaction is L-threonyl-[protein] + ATP = O-phospho-L-threonyl-[protein] + ADP + H(+). It carries out the reaction L-tyrosyl-[protein] + ATP = O-phospho-L-tyrosyl-[protein] + ADP + H(+). This chain is Serine/threonine-protein kinase AFC2 (AFC2), found in Arabidopsis thaliana (Mouse-ear cress).